Here is a 290-residue protein sequence, read N- to C-terminus: Ankyrin repeat and SOCS box protein 9 (290 aa).

The residue at position 1 (M1) is an N-acetylmethionine. The segment covering 1–11 has biased composition (basic and acidic residues); the sequence is MDGEQRGRSDR. A disordered region spans residues 1-20; it reads MDGEQRGRSDRPGGSPHLPF. 6 ANK repeats span residues 31–60, 64–93, 97–126, 129–158, 162–191, and 194–223; these read SDWS…PVNI, DHVS…QVNG, DWRT…TPHP, ELAS…NIDY, HLGT…SVNQ, and GLDS…NAQA. Residues 236 to 290 enclose the SOCS box domain; sequence PLESPLIQIFLQNEGPQSLRQLCRLRIRKCFGIRQHHKISELLLPEDLKRFLLHL.

Belongs to the ankyrin SOCS box (ASB) family. In terms of assembly, substrate-recognition component of the ECS(ASB9) complex, composed of ASB9, CUL5, ELOB, ELOC and RNF7/RBX2.

The protein resides in the mitochondrion. Its pathway is protein modification; protein ubiquitination. Functionally, substrate-recognition component of a cullin-5-RING E3 ubiquitin-protein ligase complex (ECS complex, also named CRL5 complex), which mediates the ubiquitination and subsequent proteasomal degradation of target proteins. The ECS(ASB9) complex catalyzes ubiquitination of creatine kinases CKB and CKMT1A. The protein is Ankyrin repeat and SOCS box protein 9 of Mus musculus (Mouse).